A 197-amino-acid polypeptide reads, in one-letter code: ATP-dependent Clp protease proteolytic subunit (197 aa).

Catalysis depends on S98, which acts as the Nucleophile. Residue H123 is part of the active site.

It belongs to the peptidase S14 family. As to quaternary structure, fourteen ClpP subunits assemble into 2 heptameric rings which stack back to back to give a disk-like structure with a central cavity, resembling the structure of eukaryotic proteasomes.

The protein localises to the cytoplasm. It carries out the reaction Hydrolysis of proteins to small peptides in the presence of ATP and magnesium. alpha-casein is the usual test substrate. In the absence of ATP, only oligopeptides shorter than five residues are hydrolyzed (such as succinyl-Leu-Tyr-|-NHMec, and Leu-Tyr-Leu-|-Tyr-Trp, in which cleavage of the -Tyr-|-Leu- and -Tyr-|-Trp bonds also occurs).. Cleaves peptides in various proteins in a process that requires ATP hydrolysis. Has a chymotrypsin-like activity. Plays a major role in the degradation of misfolded proteins. This Anaplasma phagocytophilum (strain HZ) protein is ATP-dependent Clp protease proteolytic subunit.